The following is a 120-amino-acid chain: MKKLTKTHSHRQQKLASIINEALIEILRRGKMLDSRLFDCPLTITKVIVTTDLKIANCYFLPFNTKLTIDEIMDALNNSKNAIRNFITNKINMKFSPDIRFHYDHGFDNAIKVAHLLKDL.

Belongs to the RbfA family. Monomer. Binds 30S ribosomal subunits, but not 50S ribosomal subunits or 70S ribosomes.

It is found in the cytoplasm. In terms of biological role, one of several proteins that assist in the late maturation steps of the functional core of the 30S ribosomal subunit. Associates with free 30S ribosomal subunits (but not with 30S subunits that are part of 70S ribosomes or polysomes). Required for efficient processing of 16S rRNA. May interact with the 5'-terminal helix region of 16S rRNA. This chain is Ribosome-binding factor A, found in Rickettsia peacockii (strain Rustic).